We begin with the raw amino-acid sequence, 629 residues long: tRNA uridine 5-carboxymethylaminomethyl modification enzyme MnmG (629 aa).

Residue 13–18 (GGGHAG) participates in FAD binding. 273–287 (GPRYCPSIEDKIMRF) contacts NAD(+).

Belongs to the MnmG family. As to quaternary structure, homodimer. Heterotetramer of two MnmE and two MnmG subunits. It depends on FAD as a cofactor.

Its subcellular location is the cytoplasm. NAD-binding protein involved in the addition of a carboxymethylaminomethyl (cmnm) group at the wobble position (U34) of certain tRNAs, forming tRNA-cmnm(5)s(2)U34. The polypeptide is tRNA uridine 5-carboxymethylaminomethyl modification enzyme MnmG (Tolumonas auensis (strain DSM 9187 / NBRC 110442 / TA 4)).